We begin with the raw amino-acid sequence, 500 residues long: Glycerol kinase (500 aa).

Threonine 11 contributes to the ADP binding site. ATP contacts are provided by threonine 11, threonine 12, and serine 13. Threonine 11 lines the sn-glycerol 3-phosphate pocket. Arginine 15 contacts ADP. Sn-glycerol 3-phosphate-binding residues include arginine 81, glutamate 82, tyrosine 133, and aspartate 242. Glycerol contacts are provided by arginine 81, glutamate 82, tyrosine 133, aspartate 242, and glutamine 243. The ADP site is built by threonine 264 and glycine 307. ATP-binding residues include threonine 264, glycine 307, glutamine 311, and glycine 411. Residue glycine 411 participates in ADP binding.

This sequence belongs to the FGGY kinase family.

The enzyme catalyses glycerol + ATP = sn-glycerol 3-phosphate + ADP + H(+). It functions in the pathway polyol metabolism; glycerol degradation via glycerol kinase pathway; sn-glycerol 3-phosphate from glycerol: step 1/1. With respect to regulation, inhibited by fructose 1,6-bisphosphate (FBP). Functionally, key enzyme in the regulation of glycerol uptake and metabolism. Catalyzes the phosphorylation of glycerol to yield sn-glycerol 3-phosphate. The sequence is that of Glycerol kinase from Bradyrhizobium sp. (strain ORS 278).